Reading from the N-terminus, the 63-residue chain is Large ribosomal subunit protein uL29 (63 aa).

Belongs to the universal ribosomal protein uL29 family.

The protein is Large ribosomal subunit protein uL29 of Proteus mirabilis (strain HI4320).